Here is a 258-residue protein sequence, read N- to C-terminus: Tryptophan synthase alpha chain (258 aa).

Residues Glu47 and Asp58 each act as proton acceptor in the active site.

It belongs to the TrpA family. As to quaternary structure, tetramer of two alpha and two beta chains.

It carries out the reaction (1S,2R)-1-C-(indol-3-yl)glycerol 3-phosphate + L-serine = D-glyceraldehyde 3-phosphate + L-tryptophan + H2O. It functions in the pathway amino-acid biosynthesis; L-tryptophan biosynthesis; L-tryptophan from chorismate: step 5/5. Its function is as follows. The alpha subunit is responsible for the aldol cleavage of indoleglycerol phosphate to indole and glyceraldehyde 3-phosphate. This Bacillus cereus (strain G9842) protein is Tryptophan synthase alpha chain.